The primary structure comprises 252 residues: Carbohydrate deacetylase (252 aa).

Residues His-59 and His-122 each contribute to the Mg(2+) site.

This sequence belongs to the YdjC deacetylase family. In terms of assembly, homodimer. Mg(2+) is required as a cofactor.

In terms of biological role, probably catalyzes the deacetylation of acetylated carbohydrates an important step in the degradation of oligosaccharides. This Vibrio vulnificus (strain YJ016) protein is Carbohydrate deacetylase.